We begin with the raw amino-acid sequence, 107 residues long: Phosphoribosyl-ATP pyrophosphatase (107 aa).

This sequence belongs to the PRA-PH family.

The protein resides in the cytoplasm. It carries out the reaction 1-(5-phospho-beta-D-ribosyl)-ATP + H2O = 1-(5-phospho-beta-D-ribosyl)-5'-AMP + diphosphate + H(+). It functions in the pathway amino-acid biosynthesis; L-histidine biosynthesis; L-histidine from 5-phospho-alpha-D-ribose 1-diphosphate: step 2/9. The protein is Phosphoribosyl-ATP pyrophosphatase (hisE) of Rhizobium meliloti (strain 1021) (Ensifer meliloti).